The chain runs to 428 residues: MNRQGNRKTTKEGSNDLKFQNFSLPKNRSWPRINSATGQYQRMNKPLLDWERNFAAVLDGAKGHSDDDYDDPELRMEETWQSIKILPARPIKESEYADTHYFKVAMDTPLPLDTRTSISIGQPTWNTQTRLERVDKPISKDVRSQNIKGDASVRKNKIPLPPPRPLITLPKKYQPLPPEPESSRPPLSQRHTFPEVQRMPSQISLRDLSEVLEAEKVPHNQRKPESTHLLENQNTQEIPLAISSSSFTTSNHSVQNRDHRGGMQPCSPQRCQPPASCSPHENILPYKYTSWRPPFPKRSDRKDVQHNEWYIGEYSRQAVEEAFMKENKDGSFLVRDCSTKSKEEPYVLAVFYENKVYNVKIRFLERNQQFALGTGLRGDEKFDSVEDIIEHYKNFPIILIDGKDKTGVHRKQCHLTQPLPLTRHLLPL.

Residues 1–22 form a disordered region; it reads MNRQGNRKTTKEGSNDLKFQNF. Y69 and Y96 each carry phosphotyrosine; by LYN. 2 disordered regions span residues 135 to 198 and 244 to 271; these read DKPI…EVQR and SSSF…PQRC. The tract at residues 159 to 164 is mediates interaction with PLCG1; essential for BCR signaling; involved in restoration of BCR-induced calcium response and ERK2 and JNK2 activation in BLNK-deficient cells expressing LAT; it reads PLPPPR. The mediates interaction with LAT, GRB2, and FGR; involved in translocation to the glycolipid-enriched microdomain and restoration of BCR-induced calcium response in BLNK-deficient DT40 cells expressing LAT stretch occupies residues 178–180; it reads PEP. Positions 244–253 are enriched in low complexity; it reads SSSFTTSNHS. The SH2 domain maps to 309-419; that stretch reads WYIGEYSRQA…RKQCHLTQPL (111 aa).

When phosphorylated, interacts with PLCG1, PLCG2, GRB2, VAV and LAT. Interacts with LBR and AGO2. Interacts with FGR. Part of a complex consisting of CLNK, SKAP1 and FYB1. Interacts (via SH2 domain) with FYB1; this interaction allows SKAP1 and FYB1 to promote tyrosine phosphorylation of CLNK by LYN. Interacts (via SH2 domain) with MAP4K1. Post-translationally, tyrosine-phosphorylated upon BCR cross-linking. Tyrosine phosphorylation at both Tyr-69 and Tyr-96 are required for BCR-induced calcium response and are essential to restore PLCG2-mediated signaling in BLNK-deficient DT40 cells, but this phosphorylation is dispensable in cells expressing LAT. Interacts with the SH2 domain of PLCG1 via phosphorylated Tyr-96. Tyrosine phosphorylation is increased when complexed with SKAP1 and FYB1.

It is found in the cytoplasm. In terms of biological role, an adapter protein which plays a role in the regulation of immunoreceptor signaling, including PLC-gamma-mediated B-cell antigen receptor (BCR) signaling and FC-epsilon R1-mediated mast cell degranulation. Together with FGR, it acts as a negative regulator of natural killer cell-activating receptors and inhibits interferon-gamma production. Acts as a positive regulator of both T-cell receptor and natural killer T (NKT) cell receptor signaling in CD4-positive NKT cells. Together with MAP4K1, it enhances CD3-triggered activation of T-cells and subsequent IL2 production. May be involved in tumor necrosis factor induced cell death by promoting reactive oxidative species generation, and MLKL oligomerization, ultimately leading to necrosis. Involved in phosphorylation of LAT. May be involved in high affinity immunoglobulin epsilon receptor signaling in mast cells. In Homo sapiens (Human), this protein is Cytokine-dependent hematopoietic cell linker (CLNK).